Here is a 318-residue protein sequence, read N- to C-terminus: UDP-3-O-acylglucosamine N-acyltransferase 1 (318 aa).

His230 acts as the Proton acceptor in catalysis.

It belongs to the transferase hexapeptide repeat family. LpxD subfamily. As to quaternary structure, homotrimer.

It carries out the reaction a UDP-3-O-[(3R)-3-hydroxyacyl]-alpha-D-glucosamine + a (3R)-hydroxyacyl-[ACP] = a UDP-2-N,3-O-bis[(3R)-3-hydroxyacyl]-alpha-D-glucosamine + holo-[ACP] + H(+). The protein operates within bacterial outer membrane biogenesis; LPS lipid A biosynthesis. Functionally, catalyzes the N-acylation of UDP-3-O-acylglucosamine using 3-hydroxyacyl-ACP as the acyl donor. Is involved in the biosynthesis of lipid A, a phosphorylated glycolipid that anchors the lipopolysaccharide to the outer membrane of the cell. The sequence is that of UDP-3-O-acylglucosamine N-acyltransferase 1 from Sulfurimonas denitrificans (strain ATCC 33889 / DSM 1251) (Thiomicrospira denitrificans (strain ATCC 33889 / DSM 1251)).